A 192-amino-acid chain; its full sequence is Ciliary microtubule inner protein 3 (192 aa).

The disordered stretch occupies residues 24-108 (RAGAEGGPSL…SGQKVKAPHR (85 aa)). The segment covering 55-64 (APRRPPRPRT) has biased composition (basic residues).

Belongs to the CIMIP3-like family. As to expression, detected in the sperm flagellum (at protein level).

The protein resides in the cytoplasm. It localises to the cytoskeleton. Its subcellular location is the flagellum axoneme. The sequence is that of Ciliary microtubule inner protein 3 from Bos taurus (Bovine).